Consider the following 335-residue polypeptide: Putative T-box protein 7 (335 aa).

A DNA-binding region (T-box) is located at residues 73–246 (LWSTFLECGT…NNPFAKGFRN (174 aa)).

The protein resides in the nucleus. This Caenorhabditis elegans protein is Putative T-box protein 7.